Reading from the N-terminus, the 106-residue chain is UPF0145 protein FTL_1249 (106 aa).

It belongs to the UPF0145 family.

The polypeptide is UPF0145 protein FTL_1249 (Francisella tularensis subsp. holarctica (strain LVS)).